The following is a 330-amino-acid chain: Tyrosine-protein phosphatase yvh1 (330 aa).

Residues 45-187 enclose the Tyrosine-protein phosphatase domain; that stretch reads NDLSEISKNL…LRVYFECNYQ (143 aa). Cysteine 131 (phosphocysteine intermediate) is an active-site residue.

This sequence belongs to the protein-tyrosine phosphatase family. Non-receptor class dual specificity subfamily.

It localises to the cytoplasm. Its subcellular location is the nucleus. It catalyses the reaction O-phospho-L-tyrosyl-[protein] + H2O = L-tyrosyl-[protein] + phosphate. May be directly involved in signal transduction and/or cell cycle regulation. It is necessary for maintaining growth rate or spore germination. Could show both activity toward tyrosine-protein phosphate as well as with serine-protein phosphate. The chain is Tyrosine-protein phosphatase yvh1 (yvh1) from Schizosaccharomyces pombe (strain 972 / ATCC 24843) (Fission yeast).